The following is a 62-amino-acid chain: Large ribosomal subunit protein bL32 (62 aa).

The tract at residues 1–20 (MAVPARHTSKQKKRSRRGHI) is disordered. Over residues 7-20 (HTSKQKKRSRRGHI) the composition is skewed to basic residues.

This sequence belongs to the bacterial ribosomal protein bL32 family.

The polypeptide is Large ribosomal subunit protein bL32 (Lactobacillus acidophilus (strain ATCC 700396 / NCK56 / N2 / NCFM)).